We begin with the raw amino-acid sequence, 1179 residues long: Integrin alpha-1 (1179 aa).

The first 28 residues, 1-28 (MVPRRPASLEVTVACIWLLTVILGVCIS), serve as a signal peptide directing secretion. Residues 29–1141 (FNVDVKNSMS…SKDGLPGRVP (1113 aa)) lie on the Extracellular side of the membrane. The FG-GAP 1 repeat unit spans residues 30–91 (NVDVKNSMSF…CPVGRERSMP (62 aa)). Cys82 and Cys92 form a disulfide bridge. N-linked (GlcNAc...) asparagine glycans are attached at residues Asn100, Asn105, Asn112, Asn217, Asn317, Asn341, Asn402, Asn418, and Asn459. Residues 101–160 (TSIPNVTEIKENMTFGSTLVTNPKGGFLACGPLYAYRCGHLHYTTGICSDVSPTFQVVNS) form an FG-GAP 2 repeat. Residues 175–364 (IVLDGSNSIY…LGERIFALEA (190 aa)) enclose the VWFA domain. Residues 365–417 (TADQSAASFEMEMSQTGFSAHYSQDWVMLGAVGAYDWNGTVVMQKANQIVIPH) form an FG-GAP 3 repeat. FG-GAP repeat units lie at residues 422-474 (QTEP…DGDV), 475-537 (NILQ…RFEY), 556-614 (SCTK…TIRK), and 618-678 (QRIP…FEPN). 4 residues coordinate Ca(2+): Asp497, Asp499, Asp501, and Asp505. N-linked (GlcNAc...) asparagine glycosylation is present at Asn531. 8 residues coordinate Ca(2+): Asp579, Asn581, Asp583, Asp587, Asp641, Asn643, Asp645, and Asp649. Cys687 and Cys696 form a disulfide bridge. N-linked (GlcNAc...) asparagine glycans are attached at residues Asn698, Asn747, and Asn779. Cys702 and Cys755 are joined by a disulfide. The cysteines at positions 807 and 813 are disulfide-linked. 7 N-linked (GlcNAc...) asparagine glycosylation sites follow: Asn839, Asn882, Asn907, Asn938, Asn965, Asn973, and Asn1007. A disulfide bridge links Cys877 with Cys885. Disulfide bonds link Cys1029-Cys1062 and Cys1065-Cys1072. Asn1083, Asn1102, and Asn1113 each carry an N-linked (GlcNAc...) asparagine glycan. Residues 1142-1164 (LWVILLSAFAGLLLLMLLILALW) traverse the membrane as a helical segment. The Cytoplasmic segment spans residues 1165 to 1179 (KIGFFKRPLKKKMEK). The GFFKR motif signature appears at 1167 to 1171 (GFFKR).

It belongs to the integrin alpha chain family. As to quaternary structure, heterodimer of an alpha and a beta subunit. Alpha-1 associates with beta-1. Interacts with RAB21. Interacts (via cytoplasmic domain) with PTPN2; activates PTPN2 phosphatase activity towards EGFR and negatively regulates EGF signaling.

The protein localises to the membrane. In terms of biological role, integrin alpha-1/beta-1 is a receptor for laminin and collagen. It recognizes the proline-hydroxylated sequence G-F-P-G-E-R in collagen. Involved in anchorage-dependent, negative regulation of EGF-stimulated cell growth. This chain is Integrin alpha-1 (Itga1), found in Mus musculus (Mouse).